We begin with the raw amino-acid sequence, 261 residues long: Cytochrome c oxidase subunit 3 (261 aa).

The Mitochondrial matrix segment spans residues 1–15 (MAHQAHAYHMVDPSP). Residues 16–34 (WPLTGAIAALLLTSGTAVW) traverse the membrane as a helical segment. Over 35 to 40 (FHFHSL) the chain is Mitochondrial intermembrane. A helical membrane pass occupies residues 41-66 (TLLTMGNILLLLTMYQWWRDIIREGT). The Mitochondrial matrix segment spans residues 67–72 (FQGHHT). Residues 73–105 (PPVQKGLRYGMILFITSEVFFFLGFFWAFYHSS) traverse the membrane as a helical segment. Residues 106-128 (LSPTPELGGCWPPTGIITLDPFE) are Mitochondrial intermembrane-facing. A helical transmembrane segment spans residues 129-152 (VPLLNTAVLLASGVTVTWAHHSIM). Residues 153–155 (EGE) lie on the Mitochondrial matrix side of the membrane. Residues 156 to 183 (RKQTIQALTLTILLGFYFTFLQGMEYYE) traverse the membrane as a helical segment. Over 184–190 (APFTIAD) the chain is Mitochondrial intermembrane. Residues 191-223 (GVYGSTFFVATGFHGLHVIIGSTFLAICLLRQI) form a helical membrane-spanning segment. Topologically, residues 224–232 (QYHFTSEHH) are mitochondrial matrix. Residues 233–256 (FGFEAAAWYWHFVDVVWLFLYVSI) traverse the membrane as a helical segment. Topologically, residues 257 to 261 (YWWGS) are mitochondrial intermembrane.

This sequence belongs to the cytochrome c oxidase subunit 3 family. As to quaternary structure, component of the cytochrome c oxidase (complex IV, CIV), a multisubunit enzyme composed of 14 subunits. The complex is composed of a catalytic core of 3 subunits MT-CO1, MT-CO2 and MT-CO3, encoded in the mitochondrial DNA, and 11 supernumerary subunits COX4I, COX5A, COX5B, COX6A, COX6B, COX6C, COX7A, COX7B, COX7C, COX8 and NDUFA4, which are encoded in the nuclear genome. The complex exists as a monomer or a dimer and forms supercomplexes (SCs) in the inner mitochondrial membrane with NADH-ubiquinone oxidoreductase (complex I, CI) and ubiquinol-cytochrome c oxidoreductase (cytochrome b-c1 complex, complex III, CIII), resulting in different assemblies (supercomplex SCI(1)III(2)IV(1) and megacomplex MCI(2)III(2)IV(2)).

The protein resides in the mitochondrion inner membrane. The enzyme catalyses 4 Fe(II)-[cytochrome c] + O2 + 8 H(+)(in) = 4 Fe(III)-[cytochrome c] + 2 H2O + 4 H(+)(out). In terms of biological role, component of the cytochrome c oxidase, the last enzyme in the mitochondrial electron transport chain which drives oxidative phosphorylation. The respiratory chain contains 3 multisubunit complexes succinate dehydrogenase (complex II, CII), ubiquinol-cytochrome c oxidoreductase (cytochrome b-c1 complex, complex III, CIII) and cytochrome c oxidase (complex IV, CIV), that cooperate to transfer electrons derived from NADH and succinate to molecular oxygen, creating an electrochemical gradient over the inner membrane that drives transmembrane transport and the ATP synthase. Cytochrome c oxidase is the component of the respiratory chain that catalyzes the reduction of oxygen to water. Electrons originating from reduced cytochrome c in the intermembrane space (IMS) are transferred via the dinuclear copper A center (CU(A)) of subunit 2 and heme A of subunit 1 to the active site in subunit 1, a binuclear center (BNC) formed by heme A3 and copper B (CU(B)). The BNC reduces molecular oxygen to 2 water molecules using 4 electrons from cytochrome c in the IMS and 4 protons from the mitochondrial matrix. This chain is Cytochrome c oxidase subunit 3 (mt-co3), found in Salmo salar (Atlantic salmon).